A 124-amino-acid polypeptide reads, in one-letter code: Aspartate 1-decarboxylase (124 aa).

Catalysis depends on Ser-25, which acts as the Schiff-base intermediate with substrate; via pyruvic acid. Residue Ser-25 is modified to Pyruvic acid (Ser). Residue Thr-57 coordinates substrate. Tyr-58 serves as the catalytic Proton donor. 73–75 contributes to the substrate binding site; that stretch reads GAA.

The protein belongs to the PanD family. In terms of assembly, heterooctamer of four alpha and four beta subunits. Pyruvate is required as a cofactor. Is synthesized initially as an inactive proenzyme, which is activated by self-cleavage at a specific serine bond to produce a beta-subunit with a hydroxyl group at its C-terminus and an alpha-subunit with a pyruvoyl group at its N-terminus.

It localises to the cytoplasm. It catalyses the reaction L-aspartate + H(+) = beta-alanine + CO2. It functions in the pathway cofactor biosynthesis; (R)-pantothenate biosynthesis; beta-alanine from L-aspartate: step 1/1. Its function is as follows. Catalyzes the pyruvoyl-dependent decarboxylation of aspartate to produce beta-alanine. This is Aspartate 1-decarboxylase from Clostridium beijerinckii (strain ATCC 51743 / NCIMB 8052) (Clostridium acetobutylicum).